Here is a 1098-residue protein sequence, read N- to C-terminus: Trehalose synthase complex regulatory subunit TSL1 (1098 aa).

Phosphoserine is present on residues serine 49, serine 53, serine 56, serine 71, serine 77, serine 135, serine 147, and serine 161. 3 disordered regions span residues 59–86 (APAP…RASS), 129–168 (SVER…QQQQ), and 192–244 (SQTS…PSIK). Polar residues predominate over residues 72–86 (RSATRSPSAFNRASS). 2 tandem repeats follow at residues 144–150 (RIASPIQ) and 158–164 (RIASPIQ). Residues 144 to 164 (RIASPIQHEHDSGSRIASPIQ) form a 2 X 7 AA repeats of R-I-A-S-P-I-Q region. Positions 213-227 (RPTSAATSLVNRTKQ) are enriched in polar residues. The segment covering 228–242 (GSASSGSSGSSAPPS) has biased composition (low complexity). Position 229 is a phosphoserine (serine 229). Phosphothreonine is present on threonine 251. A disordered region spans residues 274 to 297 (ADISSSETSSQHNESDPDDLTTAP). Serine 303 carries the post-translational modification Phosphoserine. Positions 320–812 (GGYSNKSKLK…FNQEGSKIFK (493 aa)) are TPS complex domain. Phosphothreonine is present on threonine 815. The disordered stretch occupies residues 1000–1027 (SSGQITNIQTPSQQNPSDQEQQPPASPT).

This sequence in the C-terminal section; belongs to the glycosyltransferase 20 family. As to quaternary structure, the trehalose synthase complex is composed of the two catalytic subunits TPS1 and TPS2, and at least one of the two regulatory subunits TPS3 or TSL1.

Its subcellular location is the cytoplasm. In terms of biological role, regulatory subunit of the trehalose synthase complex that catalyzes the production of trehalose from glucose-6-phosphate and UDP-glucose in a two step process. May stabilize the trehalose synthase complex, and confer sensitivity to physiological concentrations of phosphate and to fructose 6-phosphate. The polypeptide is Trehalose synthase complex regulatory subunit TSL1 (TSL1) (Saccharomyces cerevisiae (strain ATCC 204508 / S288c) (Baker's yeast)).